The following is a 73-amino-acid chain: DNA gyrase inhibitor YacG (73 aa).

Residues Cys-12, Cys-15, Cys-31, and Cys-35 each coordinate Zn(2+). Residues 47 to 73 (DYAIPGEPIDPAEPSEDRNGAEGPPTD) are disordered.

Belongs to the DNA gyrase inhibitor YacG family. As to quaternary structure, interacts with GyrB. It depends on Zn(2+) as a cofactor.

Its function is as follows. Inhibits all the catalytic activities of DNA gyrase by preventing its interaction with DNA. Acts by binding directly to the C-terminal domain of GyrB, which probably disrupts DNA binding by the gyrase. This is DNA gyrase inhibitor YacG from Methylococcus capsulatus (strain ATCC 33009 / NCIMB 11132 / Bath).